An 865-amino-acid polypeptide reads, in one-letter code: DNA mismatch repair protein MutS (865 aa).

609-616 (GPNMAGKS) serves as a coordination point for ATP.

Belongs to the DNA mismatch repair MutS family.

This protein is involved in the repair of mismatches in DNA. It is possible that it carries out the mismatch recognition step. This protein has a weak ATPase activity. This is DNA mismatch repair protein MutS from Leuconostoc citreum (strain KM20).